A 437-amino-acid polypeptide reads, in one-letter code: Branched-chain amino acid transport system 3 carrier protein (437 aa).

12 helical membrane passes run 9–29, 40–60, 79–99, 120–140, 155–175, 189–209, 226–246, 277–297, 316–336, 342–362, 369–389, and 399–419; these read ILAL…IIFP, VWLA…ITVI, YAGG…FAIP, ALFV…LYPG, ILAL…PIGT, FVNG…IVIV, YAIV…VSLF, LGSS…AVGL, LVII…TKLI, VLTA…CIGL, ILAP…LKAA, and LLHL…VATL.

The protein belongs to the branched chain amino acid transporter family.

It is found in the cell inner membrane. In terms of biological role, component of the LIV-III transport system for branched-chain amino acids. BraZ is specific for isoleucine and valine. The LIV-III transport system may be H(+)-coupled. The sequence is that of Branched-chain amino acid transport system 3 carrier protein (braZ) from Pseudomonas aeruginosa (strain ATCC 15692 / DSM 22644 / CIP 104116 / JCM 14847 / LMG 12228 / 1C / PRS 101 / PAO1).